Here is a 101-residue protein sequence, read N- to C-terminus: MKTKLKIGDSVKILSGKDRGRIGKIASINRKKNKVIVESCNMVKKVIKARTPQEKGRIIDKEAAIDISNVMIFVKGTSSRLGIRFENNEKIRYLKKNGQRI.

Belongs to the universal ribosomal protein uL24 family. Part of the 50S ribosomal subunit.

Functionally, one of two assembly initiator proteins, it binds directly to the 5'-end of the 23S rRNA, where it nucleates assembly of the 50S subunit. One of the proteins that surrounds the polypeptide exit tunnel on the outside of the subunit. This is Large ribosomal subunit protein uL24 from Borreliella burgdorferi (strain ATCC 35210 / DSM 4680 / CIP 102532 / B31) (Borrelia burgdorferi).